The primary structure comprises 122 residues: Large ribosomal subunit protein uL14 (122 aa).

Belongs to the universal ribosomal protein uL14 family. As to quaternary structure, part of the 50S ribosomal subunit. Forms a cluster with proteins L3 and L19. In the 70S ribosome, L14 and L19 interact and together make contacts with the 16S rRNA in bridges B5 and B8.

Binds to 23S rRNA. Forms part of two intersubunit bridges in the 70S ribosome. The polypeptide is Large ribosomal subunit protein uL14 (Acidovorax sp. (strain JS42)).